The sequence spans 520 residues: GMP synthase [glutamine-hydrolyzing] (520 aa).

Positions Lys12–Asp205 constitute a Glutamine amidotransferase type-1 domain. Residue Cys89 is the Nucleophile of the active site. Active-site residues include His179 and Glu181. A GMPS ATP-PPase domain is found at Trp206–Arg395. Ser233–Ser239 provides a ligand contact to ATP.

Homodimer.

It carries out the reaction XMP + L-glutamine + ATP + H2O = GMP + L-glutamate + AMP + diphosphate + 2 H(+). It functions in the pathway purine metabolism; GMP biosynthesis; GMP from XMP (L-Gln route): step 1/1. In terms of biological role, catalyzes the synthesis of GMP from XMP. This chain is GMP synthase [glutamine-hydrolyzing], found in Streptococcus pyogenes serotype M5 (strain Manfredo).